Consider the following 540-residue polypeptide: Tyrosinase (540 aa).

A signal peptide spans 1–19 (MKSLFLSAVLLQFFETCWS). Over 20–480 (QFPRPCANSE…LQQAQQIWQW (461 aa)) the chain is Lumenal, melanosome. The N-linked (GlcNAc...) asparagine glycan is linked to N87. The Cu cation site is built by H182, H205, and H214. N-linked (GlcNAc...) asparagine glycans are attached at residues N233, N293, and N340. Residues H366 and H370 each coordinate Cu cation. A glycan (N-linked (GlcNAc...) asparagine) is linked at N374. Residue H393 participates in Cu cation binding. A helical transmembrane segment spans residues 481–501 (LLGAGILGALIATIVAAVIVF). Residues 502–540 (ARRKRRRNQKRKRAPSFGERQPLLQSSSEEGSSSYQTTL) lie on the Cytoplasmic side of the membrane. Residues 511–540 (KRKRAPSFGERQPLLQSSSEEGSSSYQTTL) form a disordered region. Low complexity predominate over residues 527-540 (SSSEEGSSSYQTTL).

The protein belongs to the tyrosinase family. Cu(2+) serves as cofactor.

Its subcellular location is the melanosome membrane. It carries out the reaction 2 L-dopa + O2 = 2 L-dopaquinone + 2 H2O. The enzyme catalyses L-tyrosine + O2 = L-dopaquinone + H2O. This is a copper-containing oxidase that functions in the formation of pigments such as melanins and other polyphenolic compounds. This Oryzias latipes (Japanese rice fish) protein is Tyrosinase (tyr).